Here is a 290-residue protein sequence, read N- to C-terminus: 4-diphosphocytidyl-2-C-methyl-D-erythritol kinase (290 aa).

Lys14 is a catalytic residue. 103–113 (PMGGGLGGGSS) is a binding site for ATP. Asp145 is a catalytic residue.

It belongs to the GHMP kinase family. IspE subfamily. Homodimer.

It carries out the reaction 4-CDP-2-C-methyl-D-erythritol + ATP = 4-CDP-2-C-methyl-D-erythritol 2-phosphate + ADP + H(+). Its pathway is isoprenoid biosynthesis; isopentenyl diphosphate biosynthesis via DXP pathway; isopentenyl diphosphate from 1-deoxy-D-xylulose 5-phosphate: step 3/6. Catalyzes the phosphorylation of the position 2 hydroxy group of 4-diphosphocytidyl-2C-methyl-D-erythritol. The chain is 4-diphosphocytidyl-2-C-methyl-D-erythritol kinase from Pectobacterium carotovorum subsp. carotovorum (strain PC1).